A 310-amino-acid polypeptide reads, in one-letter code: Protease HtpX homolog (310 aa).

2 helical membrane passes run 16 to 36 (NAVLTTYCAIFAFIGLLVDAI) and 55 to 75 (IFPTITIVMFVVAFVIILVCI). His166 lines the Zn(2+) pocket. Residue Glu167 is part of the active site. His170 lines the Zn(2+) pocket. A run of 2 helical transmembrane segments spans residues 182-202 (VGILSNIMLLVANFSVYFFMG) and 214-234 (MILWVLQIILPFLTLLLQMYL). Glu239 contacts Zn(2+).

It belongs to the peptidase M48B family. It depends on Zn(2+) as a cofactor.

It is found in the cell inner membrane. This is Protease HtpX homolog from Helicobacter pylori (strain J99 / ATCC 700824) (Campylobacter pylori J99).